A 67-amino-acid chain; its full sequence is Islet amyloid polypeptide (67 aa).

The N-terminal stretch at 1-22 is a signal peptide; the sequence is MCILKLPIVLLVLSVAVNHLQA. Positions 23 to 31 are excised as a propeptide; that stretch reads SPVESHQVE. Cysteine 35 and cysteine 40 are disulfide-bonded.

This sequence belongs to the calcitonin family. In terms of assembly, can form homodimers. Interacts with IDE and INS. Interaction with INS inhibits homodimerization and fibril formation.

The protein resides in the secreted. Amylin/IAPP is a glucoregulatory peptide hormone that plays an important role in the regulation of energy homeostasis. Selectively inhibits insulin-stimulated glucose utilization and glycogen deposition in muscle, while not affecting adipocyte glucose metabolism. IAPP function is mediated by the CALCR-RAMPs (AMYRs) receptor complexes. Amylin can also bind CALCR receptor in the absence of RAMPs, although it is more selective for AMYRs. The protein is Islet amyloid polypeptide (IAPP) of Oryctolagus cuniculus (Rabbit).